The sequence spans 1009 residues: Serine/threonine-protein phosphatase BSL2 homolog (1009 aa).

The tract at residues 1-48 is disordered; the sequence is MDVDSRMTTESDSDSDAAAQGGGGGGFGSETSSASPSAPGTPTAMGAG. Over residues 29 to 45 the composition is skewed to low complexity; the sequence is SETSSASPSAPGTPTAM. Kelch repeat units follow at residues 136–182, 240–288, 293–344, 349–396, and 417–463; these read SSAG…VATA, FLLT…TASA, LLLL…FVNA, SGGA…DAAG, and MIYV…IQAG. The tract at residues 549–572 is disordered; the sequence is QVNGEAEHSPDREQSPDATPSVKQ. Positions 553–563 are enriched in basic and acidic residues; sequence EAEHSPDREQS. Mn(2+) is bound by residues aspartate 711, histidine 713, aspartate 745, and asparagine 777. Histidine 778 (proton donor) is an active-site residue. Residues histidine 830 and histidine 909 each coordinate Mn(2+). Residues 984–1009 form a disordered region; the sequence is NANRPPTPTRGRPQAANNDRGSLAWI.

The protein belongs to the PPP phosphatase family. BSU subfamily. Requires Mn(2+) as cofactor.

It localises to the nucleus. The enzyme catalyses O-phospho-L-seryl-[protein] + H2O = L-seryl-[protein] + phosphate. The catalysed reaction is O-phospho-L-threonyl-[protein] + H2O = L-threonyl-[protein] + phosphate. The polypeptide is Serine/threonine-protein phosphatase BSL2 homolog (BSL2) (Oryza sativa subsp. japonica (Rice)).